The sequence spans 311 residues: tRNA dimethylallyltransferase (311 aa).

13-20 contacts ATP; that stretch reads GPTASGKT. Position 15-20 (15-20) interacts with substrate; that stretch reads TASGKT. Interaction with substrate tRNA regions lie at residues 38-41 and 166-170; these read DSMQ and QRVLR.

Belongs to the IPP transferase family. In terms of assembly, monomer. It depends on Mg(2+) as a cofactor.

The catalysed reaction is adenosine(37) in tRNA + dimethylallyl diphosphate = N(6)-dimethylallyladenosine(37) in tRNA + diphosphate. Catalyzes the transfer of a dimethylallyl group onto the adenine at position 37 in tRNAs that read codons beginning with uridine, leading to the formation of N6-(dimethylallyl)adenosine (i(6)A). In Staphylococcus aureus (strain MRSA252), this protein is tRNA dimethylallyltransferase.